The following is a 1002-amino-acid chain: Isoleucine--tRNA ligase (1002 aa).

Positions P70–H80 match the 'HIGH' region motif. E630 lines the L-isoleucyl-5'-AMP pocket. The short motif at K671–S675 is the 'KMSKS' region element. K674 provides a ligand contact to ATP.

It belongs to the class-I aminoacyl-tRNA synthetase family. IleS type 1 subfamily. Monomer.

The protein localises to the cytoplasm. It catalyses the reaction tRNA(Ile) + L-isoleucine + ATP = L-isoleucyl-tRNA(Ile) + AMP + diphosphate. Functionally, catalyzes the attachment of isoleucine to tRNA(Ile). As IleRS can inadvertently accommodate and process structurally similar amino acids such as valine, to avoid such errors it has two additional distinct tRNA(Ile)-dependent editing activities. One activity is designated as 'pretransfer' editing and involves the hydrolysis of activated Val-AMP. The other activity is designated 'posttransfer' editing and involves deacylation of mischarged Val-tRNA(Ile). This is Isoleucine--tRNA ligase from Bradyrhizobium diazoefficiens (strain JCM 10833 / BCRC 13528 / IAM 13628 / NBRC 14792 / USDA 110).